The sequence spans 178 residues: Interleukin-10 (178 aa).

A signal peptide spans M1–A18. 2 disulfides stabilise this stretch: C30-C126 and C80-C132. N134 carries N-linked (GlcNAc...) asparagine glycosylation.

Belongs to the IL-10 family. Homodimer. Interacts with IL10RA and IL10RB.

Its subcellular location is the secreted. Major immune regulatory cytokine that acts on many cells of the immune system where it has profound anti-inflammatory functions, limiting excessive tissue disruption caused by inflammation. Mechanistically, IL10 binds to its heterotetrameric receptor comprising IL10RA and IL10RB leading to JAK1 and STAT2-mediated phosphorylation of STAT3. In turn, STAT3 translocates to the nucleus where it drives expression of anti-inflammatory mediators. Targets antigen-presenting cells (APCs) such as macrophages and monocytes and inhibits their release of pro-inflammatory cytokines including granulocyte-macrophage colony-stimulating factor /GM-CSF, granulocyte colony-stimulating factor/G-CSF, IL-1 alpha, IL-1 beta, IL-6, IL-8 and TNF-alpha. Also interferes with antigen presentation by reducing the expression of MHC-class II and co-stimulatory molecules, thereby inhibiting their ability to induce T cell activation. In addition, controls the inflammatory response of macrophages by reprogramming essential metabolic pathways including mTOR signaling. The chain is Interleukin-10 (IL10) from Cercocebus atys (Sooty mangabey).